A 730-amino-acid polypeptide reads, in one-letter code: Neuroligin-like protein glit-1 (730 aa).

The first 18 residues, 1-18, serve as a signal peptide directing secretion; sequence MFTGTIFNSLFTLPLVIS. Residues 19-663 lie on the Extracellular side of the membrane; the sequence is QFVPPPTRPV…EIMVFKWITG (645 aa). N-linked (GlcNAc...) asparagine glycans are attached at residues N103, N320, N445, N512, N557, N564, and N604. A helical transmembrane segment spans residues 664–684; it reads VNVIIIALLIVLAGAFGYMVW. At 685-730 the chain is on the cytoplasmic side; the sequence is GNKEDEEAAYKAENHQLVEYRDTGHSVSDATISSRTRSPRSRITNL.

It belongs to the type-B carboxylesterase/lipase family. As to expression, expressed in the pharynx, intestine, and in several cells in the head including dopaminergic neurons.

It localises to the cell membrane. Functionally, probable neuronal cell surface protein thought to be involved in cell-cell-interactions. Confers protection against oxidative stress. Plays a role in protecting dopaminergic neurons against oxidative stress-induced neurodegeneration. The chain is Neuroligin-like protein glit-1 from Caenorhabditis elegans.